Here is a 110-residue protein sequence, read N- to C-terminus: UPF0060 membrane protein Pmen_1247 (110 aa).

Transmembrane regions (helical) follow at residues 5-25, 31-51, 59-79, and 84-104; these read LWFLLAAVFEIAGCYAFWMWL, AWWIAPGLLSLVLFALILTRV, AYAAYGGVYIVASLAWLALIE, and MLSDWLGAALCLAGAAIILFA.

Belongs to the UPF0060 family.

Its subcellular location is the cell inner membrane. This is UPF0060 membrane protein Pmen_1247 from Ectopseudomonas mendocina (strain ymp) (Pseudomonas mendocina).